The chain runs to 131 residues: Secreted RxLR effector protein 45 (131 aa).

Positions 1–16 (MSIFIFISLVLGLAHQ) are cleaved as a signal peptide. A RxLR motif is present at residues 56 to 59 (RPLR). A glycan (N-linked (GlcNAc...) asparagine) is linked at N128.

Belongs to the RxLR effector family.

Its subcellular location is the secreted. It is found in the host nucleus. Its function is as follows. Secreted effector that completely suppresses the host cell death induced by cell death-inducing proteins. The chain is Secreted RxLR effector protein 45 from Plasmopara viticola (Downy mildew of grapevine).